A 380-amino-acid chain; its full sequence is Alanine racemase (380 aa).

The Proton acceptor; specific for D-alanine role is filled by K41. At K41 the chain carries N6-(pyridoxal phosphate)lysine. R141 contributes to the substrate binding site. Y271 acts as the Proton acceptor; specific for L-alanine in catalysis. M318 is a binding site for substrate.

It belongs to the alanine racemase family. The cofactor is pyridoxal 5'-phosphate.

It carries out the reaction L-alanine = D-alanine. It participates in amino-acid biosynthesis; D-alanine biosynthesis; D-alanine from L-alanine: step 1/1. Its function is as follows. Catalyzes the interconversion of L-alanine and D-alanine. May also act on other amino acids. This chain is Alanine racemase (alr), found in Latilactobacillus sakei subsp. sakei (strain 23K) (Lactobacillus sakei subsp. sakei).